The primary structure comprises 211 residues: FMN-dependent NADH:quinone oxidoreductase 2 (211 aa).

Position 17-19 (17-19 (SYS)) interacts with FMN.

This sequence belongs to the azoreductase type 1 family. Homodimer. FMN is required as a cofactor.

The catalysed reaction is 2 a quinone + NADH + H(+) = 2 a 1,4-benzosemiquinone + NAD(+). It carries out the reaction N,N-dimethyl-1,4-phenylenediamine + anthranilate + 2 NAD(+) = 2-(4-dimethylaminophenyl)diazenylbenzoate + 2 NADH + 2 H(+). Its function is as follows. Quinone reductase that provides resistance to thiol-specific stress caused by electrophilic quinones. Also exhibits azoreductase activity. Catalyzes the reductive cleavage of the azo bond in aromatic azo compounds to the corresponding amines. The protein is FMN-dependent NADH:quinone oxidoreductase 2 of Bacillus licheniformis (strain ATCC 14580 / DSM 13 / JCM 2505 / CCUG 7422 / NBRC 12200 / NCIMB 9375 / NCTC 10341 / NRRL NRS-1264 / Gibson 46).